A 507-amino-acid polypeptide reads, in one-letter code: ATP synthase subunit alpha, chloroplastic (507 aa).

170–177 serves as a coordination point for ATP; that stretch reads GDRQTGKT. Disordered stretches follow at residues 278 to 325, 392 to 430, and 452 to 471; these read PRRP…TQAG, EPEA…APLP, and GQVQ…NKPE. Basic and acidic residues predominate over residues 282–303; that stretch reads PGREAHPGDVPHLHPRPPERAA. Positions 305 to 322 are enriched in polar residues; the sequence is LSSQPGEGSTTASPTVET.

This sequence belongs to the ATPase alpha/beta chains family. In terms of assembly, F-type ATPases have 2 components, CF(1) - the catalytic core - and CF(0) - the membrane proton channel. CF(1) has five subunits: alpha(3), beta(3), gamma(1), delta(1), epsilon(1). CF(0) has four main subunits: a, b, b' and c.

The protein resides in the plastid. Its subcellular location is the chloroplast thylakoid membrane. It catalyses the reaction ATP + H2O + 4 H(+)(in) = ADP + phosphate + 5 H(+)(out). Produces ATP from ADP in the presence of a proton gradient across the membrane. The alpha chain is a regulatory subunit. In Selaginella uncinata (Blue spike-moss), this protein is ATP synthase subunit alpha, chloroplastic.